A 554-amino-acid polypeptide reads, in one-letter code: Inactive sesquithujene synthase (554 aa).

Residues Asp-308 and Asp-312 each contribute to the Mg(2+) site. Residues Asp-308, Asp-312, Arg-449, and Asn-452 each coordinate substrate. The short motif at 308–312 (DDMFD) is the DDXXD motif element. Residues Asn-452, Ser-456, and Glu-460 each coordinate Mg(2+).

Belongs to the terpene synthase family. Monomer. Mg(2+) serves as cofactor. Mn(2+) is required as a cofactor.

It is found in the cytoplasm. The protein operates within secondary metabolite biosynthesis; terpenoid biosynthesis. In terms of biological role, non-functional sesquiterpene synthase having less than 1% of the activity found in cv. Delprim. The protein is Inactive sesquithujene synthase of Zea mays (Maize).